The following is a 438-amino-acid chain: Death-associated inhibitor of apoptosis 1 (438 aa).

The stretch at 44–110 (EETRLKTFTD…QRWSPNCPLL (67 aa)) is one BIR 1 repeat. A disordered region spans residues 194 to 213 (TATQATGDVQPETCRPSAAS). A BIR 2 repeat occupies 226-293 (ETARLRTFEA…ALWLSQCRFV (68 aa)). Zn(2+)-binding residues include C263, C266, H283, and C290. Residues 322–346 (GGVAVASTQASEEEQQTSLSSEEAV) are disordered. Low complexity predominate over residues 327-345 (ASTQASEEEQQTSLSSEEA). An RING-type zinc finger spans residues 391–426 (CKICYGAEYNTAFLPCGHVVACAKCASSVTKCPLCR).

Belongs to the IAP family. In terms of assembly, interacts (via BIR 2 domain) with Dronc (via residues 114-125). Rpr, hid and grim can outcompete Dronc for binding Diap1 therefore removing Diap1-mediated ubiquitination. Interacts (via BIR 2 domain) with HtrA2; this displaces any bound Dronc. Interacts with Strica. The N-terminally cleaved form interacts with Ubr3 (via UBR-type zinc finger); the interaction promotes the recruitment and uniquitination of substrate capases such as Dronc. Post-translationally, ubiquitinated and degraded by HtrA2 in apoptotic cells; proteolytic cleavage at specific sites in the BIR domain linker region generating inactive fragments. Mutation of one site reduces but does not abolish cleavage as another site is selected by the protease.

It carries out the reaction S-ubiquitinyl-[E2 ubiquitin-conjugating enzyme]-L-cysteine + [acceptor protein]-L-lysine = [E2 ubiquitin-conjugating enzyme]-L-cysteine + N(6)-ubiquitinyl-[acceptor protein]-L-lysine.. In terms of biological role, anti-apoptotic protein which functions as a caspase regulator, using its E3 ubiquitin-protein ligase activity to smother caspase activity. Binds, ubiquitinates and inactivates initiator caspase Dronc, and effector caspases Drice and Dcp-1. Acts as a Nedd8-E3 ubiquitin-protein ligase for Drice. Suppresses apoptosis by targeting the apoptosome for ubiquitination and inactivation. Plays an important role in cell motility. Overexpression suppresses rpr and hid-dependent cell death in the eye. Interaction of Diap1 with Dronc is required to suppress Dronc-mediated cell death through Diap1-mediated ubiquitination of Dronc. Acts as a positive regulator of Wnt signaling. In Drosophila melanogaster (Fruit fly), this protein is Death-associated inhibitor of apoptosis 1 (Diap1).